Consider the following 116-residue polypeptide: Small ribosomal subunit protein bS16 (116 aa).

Belongs to the bacterial ribosomal protein bS16 family.

In Chlamydia trachomatis serovar L2 (strain ATCC VR-902B / DSM 19102 / 434/Bu), this protein is Small ribosomal subunit protein bS16.